The chain runs to 231 residues: NADH-ubiquinone oxidoreductase chain 4 (231 aa).

Transmembrane regions (helical) follow at residues 1-21 (PIAG…YGII), 34-54 (LFIP…LTCL), 61-80 (SLIA…AITI), 84-106 (WGLS…LFCL), 118-138 (VLIL…WWLL), and 156-178 (LLIM…LSML).

Belongs to the complex I subunit 4 family.

It is found in the mitochondrion membrane. The enzyme catalyses a ubiquinone + NADH + 5 H(+)(in) = a ubiquinol + NAD(+) + 4 H(+)(out). Its function is as follows. Core subunit of the mitochondrial membrane respiratory chain NADH dehydrogenase (Complex I) that is believed to belong to the minimal assembly required for catalysis. Complex I functions in the transfer of electrons from NADH to the respiratory chain. The immediate electron acceptor for the enzyme is believed to be ubiquinone. The chain is NADH-ubiquinone oxidoreductase chain 4 (MT-ND4) from Azemiops feae (Fea's viper).